The primary structure comprises 160 residues: Troponin C, skeletal muscle (160 aa).

An N-acetylthreonine modification is found at threonine 2. 4 consecutive EF-hand domains span residues 15-50, 51-86, 91-126, and 127-160; these read EMIA…LGQT, PTKE…QMKE, KSEE…SGEH, and VTEE…EGVQ. Residues aspartate 28, aspartate 30, aspartate 34, glutamate 39, aspartate 64, aspartate 66, serine 68, threonine 70, glutamate 75, aspartate 104, asparagine 106, aspartate 108, tyrosine 110, glutamate 115, aspartate 140, asparagine 142, aspartate 144, arginine 146, and glutamate 151 each contribute to the Ca(2+) site.

Belongs to the troponin C family. Fast skeletal muscle.

Functionally, troponin is the central regulatory protein of striated muscle contraction. Tn consists of three components: Tn-I which is the inhibitor of actomyosin ATPase, Tn-T which contains the binding site for tropomyosin and Tn-C. The binding of calcium to Tn-C abolishes the inhibitory action of Tn on actin filaments. This chain is Troponin C, skeletal muscle (Tnnc2), found in Mus musculus (Mouse).